Reading from the N-terminus, the 147-residue chain is Hemoglobin subunit beta-1 (147 aa).

At Val2 the chain carries N-acetylvaline. One can recognise a Globin domain in the interval 3–147 (HLTDAEKAAV…VASALAHKYH (145 aa)). Lys18 is subject to N6-succinyllysine. A phosphoserine mark is found at Ser45, Ser51, and Ser53. Position 60 is an N6-succinyllysine (Lys60). Heme b is bound by residues His64 and His93. Arg105 is subject to Asymmetric dimethylarginine. Position 124 is a phosphothreonine (Thr124).

This sequence belongs to the globin family. Heterotetramer of two alpha chains and two beta chains. Red blood cells.

Its function is as follows. Involved in oxygen transport from the lung to the various peripheral tissues. This chain is Hemoglobin subunit beta-1 (Hbb), found in Rattus norvegicus (Rat).